A 436-amino-acid chain; its full sequence is GTPase Obg (436 aa).

The Obg domain occupies 2–160 (SMFLDTAKIQ…RELLLELKVL (159 aa)). Positions 161–338 (ADVGLVGFPS…LLDATAELLD (178 aa)) constitute an OBG-type G domain. Residues 167–174 (GFPSVGKS), 192–196 (FTTIV), 214–217 (DLPG), 284–287 (NKMD), and 319–321 (SSL) each bind GTP. Residues Ser-174 and Thr-194 each contribute to the Mg(2+) site. The 79-residue stretch at 358–436 (GFDEEAPAFE…IGKFEFEFVD (79 aa)) folds into the OCT domain.

Belongs to the TRAFAC class OBG-HflX-like GTPase superfamily. OBG GTPase family. In terms of assembly, monomer. Mg(2+) is required as a cofactor.

It is found in the cytoplasm. In terms of biological role, an essential GTPase which binds GTP, GDP and possibly (p)ppGpp with moderate affinity, with high nucleotide exchange rates and a fairly low GTP hydrolysis rate. Plays a role in control of the cell cycle, stress response, ribosome biogenesis and in those bacteria that undergo differentiation, in morphogenesis control. The sequence is that of GTPase Obg from Streptococcus sanguinis (strain SK36).